The following is an 82-amino-acid chain: Cytochrome b559 subunit alpha (82 aa).

Residues 22-36 form a helical membrane-spanning segment; that stretch reads VIHAVTLPSIFLAGY. Histidine 24 lines the heme pocket.

This sequence belongs to the PsbE/PsbF family. As to quaternary structure, heterodimer of an alpha subunit and a beta subunit. PSII is composed of 1 copy each of membrane proteins PsbA, PsbB, PsbC, PsbD, PsbE, PsbF, PsbH, PsbI, PsbJ, PsbK, PsbL, PsbM, PsbT, PsbX, PsbY, Psb30/Ycf12, peripheral proteins PsbO, CyanoQ (PsbQ), PsbU, PsbV and a large number of cofactors. It forms dimeric complexes. Heme b serves as cofactor.

It is found in the cellular thylakoid membrane. Its function is as follows. This b-type cytochrome is tightly associated with the reaction center of photosystem II (PSII). PSII is a light-driven water:plastoquinone oxidoreductase that uses light energy to abstract electrons from H(2)O, generating O(2) and a proton gradient subsequently used for ATP formation. It consists of a core antenna complex that captures photons, and an electron transfer chain that converts photonic excitation into a charge separation. This chain is Cytochrome b559 subunit alpha, found in Prochlorococcus marinus (strain MIT 9303).